Here is a 143-residue protein sequence, read N- to C-terminus: 6,7-dimethyl-8-ribityllumazine synthase (143 aa).

5-amino-6-(D-ribitylamino)uracil is bound by residues tryptophan 10, 44 to 46 (SFE), and 68 to 70 (CVI). 73-74 (DT) serves as a coordination point for (2S)-2-hydroxy-3-oxobutyl phosphate. The Proton donor role is filled by histidine 76. Tyrosine 101 is a binding site for 5-amino-6-(D-ribitylamino)uracil. Residue arginine 115 participates in (2S)-2-hydroxy-3-oxobutyl phosphate binding.

The protein belongs to the DMRL synthase family.

The catalysed reaction is (2S)-2-hydroxy-3-oxobutyl phosphate + 5-amino-6-(D-ribitylamino)uracil = 6,7-dimethyl-8-(1-D-ribityl)lumazine + phosphate + 2 H2O + H(+). The protein operates within cofactor biosynthesis; riboflavin biosynthesis; riboflavin from 2-hydroxy-3-oxobutyl phosphate and 5-amino-6-(D-ribitylamino)uracil: step 1/2. In terms of biological role, catalyzes the formation of 6,7-dimethyl-8-ribityllumazine by condensation of 5-amino-6-(D-ribitylamino)uracil with 3,4-dihydroxy-2-butanone 4-phosphate. This is the penultimate step in the biosynthesis of riboflavin. In Bacteroides fragilis (strain YCH46), this protein is 6,7-dimethyl-8-ribityllumazine synthase.